We begin with the raw amino-acid sequence, 495 residues long: Siroheme synthase 2 (495 aa).

Residues 1 to 205 (MDHYPIFLNL…GREREAEQAM (205 aa)) form a precorrin-2 dehydrogenase /sirohydrochlorin ferrochelatase region. NAD(+) contacts are provided by residues 22 to 23 (ET) and 43 to 44 (PD). At Ser130 the chain carries Phosphoserine. Residues 220–495 (GEVYLVGAGP…HPAPADTEQA (276 aa)) form a uroporphyrinogen-III C-methyltransferase region. Pro229 contacts S-adenosyl-L-methionine. Asp252 serves as the catalytic Proton acceptor. Lys274 (proton donor) is an active-site residue. Residues 305–307 (GGD), Ile310, 335–336 (TA), Met387, and Ala416 contribute to the S-adenosyl-L-methionine site. The interval 471–495 (FPEHGCLRGEPRPTRHPAPADTEQA) is disordered.

In the N-terminal section; belongs to the precorrin-2 dehydrogenase / sirohydrochlorin ferrochelatase family. It in the C-terminal section; belongs to the precorrin methyltransferase family.

It catalyses the reaction uroporphyrinogen III + 2 S-adenosyl-L-methionine = precorrin-2 + 2 S-adenosyl-L-homocysteine + H(+). It carries out the reaction precorrin-2 + NAD(+) = sirohydrochlorin + NADH + 2 H(+). The enzyme catalyses siroheme + 2 H(+) = sirohydrochlorin + Fe(2+). It participates in cofactor biosynthesis; adenosylcobalamin biosynthesis; precorrin-2 from uroporphyrinogen III: step 1/1. Its pathway is cofactor biosynthesis; adenosylcobalamin biosynthesis; sirohydrochlorin from precorrin-2: step 1/1. The protein operates within porphyrin-containing compound metabolism; siroheme biosynthesis; precorrin-2 from uroporphyrinogen III: step 1/1. It functions in the pathway porphyrin-containing compound metabolism; siroheme biosynthesis; siroheme from sirohydrochlorin: step 1/1. It participates in porphyrin-containing compound metabolism; siroheme biosynthesis; sirohydrochlorin from precorrin-2: step 1/1. Functionally, multifunctional enzyme that catalyzes the SAM-dependent methylations of uroporphyrinogen III at position C-2 and C-7 to form precorrin-2 via precorrin-1. Then it catalyzes the NAD-dependent ring dehydrogenation of precorrin-2 to yield sirohydrochlorin. Finally, it catalyzes the ferrochelation of sirohydrochlorin to yield siroheme. The polypeptide is Siroheme synthase 2 (Halorhodospira halophila (strain DSM 244 / SL1) (Ectothiorhodospira halophila (strain DSM 244 / SL1))).